The following is a 355-amino-acid chain: MAIDENKQKALAAALGQIEKQFGKGSIMRLGEDRSMNVETISTGSLSLDVALGAGGLPRGRIVEIYGPESSGKTTLTLQVIASAQREGKICAFIDAEHALDPIYAQKLGVDIDNLLCSQPDTGEQALEICDALSRSGAVDVIVVDSVAALTPKAEIEGEIGDSHVGLAARMMSQAMRKLAGNLKNSNTLLIFINQIRMKIGVMFGNPETTTGGNALKFYASVRLDIRRIGSVKNGDEVIGSETRVKVVKNKVAAPFKQAEFQIMYGEGINTYGELIDLGVKHKLVEKAGAWYSYNGEKIGQGKANATNYLKEHPEMYNELNTKLREMLLNHAGEFTSAADFAGEESDSDADDTKE.

Position 67–74 (67–74 (GPESSGKT)) interacts with ATP.

Belongs to the RecA family.

The protein localises to the cytoplasm. Functionally, can catalyze the hydrolysis of ATP in the presence of single-stranded DNA, the ATP-dependent uptake of single-stranded DNA by duplex DNA, and the ATP-dependent hybridization of homologous single-stranded DNAs. It interacts with LexA causing its activation and leading to its autocatalytic cleavage. This chain is Protein RecA, found in Proteus mirabilis (strain HI4320).